Consider the following 138-residue polypeptide: Large ribosomal subunit protein uL16 (138 aa).

Over residues Met1 to Gln13 the composition is skewed to basic residues. The tract at residues Met1–Leu20 is disordered.

It belongs to the universal ribosomal protein uL16 family. In terms of assembly, part of the 50S ribosomal subunit.

Functionally, binds 23S rRNA and is also seen to make contacts with the A and possibly P site tRNAs. This chain is Large ribosomal subunit protein uL16, found in Bordetella avium (strain 197N).